The following is a 198-amino-acid chain: GTP cyclohydrolase 1 (198 aa).

Zn(2+) is bound by residues Cys87, His90, and Cys158.

Belongs to the GTP cyclohydrolase I family. As to quaternary structure, homomer.

It carries out the reaction GTP + H2O = 7,8-dihydroneopterin 3'-triphosphate + formate + H(+). It functions in the pathway cofactor biosynthesis; 7,8-dihydroneopterin triphosphate biosynthesis; 7,8-dihydroneopterin triphosphate from GTP: step 1/1. In Janthinobacterium sp. (strain Marseille) (Minibacterium massiliensis), this protein is GTP cyclohydrolase 1.